The following is a 230-amino-acid chain: Large ribosomal subunit protein uL1 (230 aa).

This sequence belongs to the universal ribosomal protein uL1 family. In terms of assembly, part of the 50S ribosomal subunit.

Binds directly to 23S rRNA. The L1 stalk is quite mobile in the ribosome, and is involved in E site tRNA release. In terms of biological role, protein L1 is also a translational repressor protein, it controls the translation of the L11 operon by binding to its mRNA. The protein is Large ribosomal subunit protein uL1 of Bifidobacterium longum (strain DJO10A).